The following is a 374-amino-acid chain: Ribosomal RNA large subunit methyltransferase G (374 aa).

This sequence belongs to the methyltransferase superfamily. RlmG family.

It is found in the cytoplasm. It carries out the reaction guanosine(1835) in 23S rRNA + S-adenosyl-L-methionine = N(2)-methylguanosine(1835) in 23S rRNA + S-adenosyl-L-homocysteine + H(+). Specifically methylates the guanine in position 1835 (m2G1835) of 23S rRNA. This is Ribosomal RNA large subunit methyltransferase G from Pseudomonas paraeruginosa (strain DSM 24068 / PA7) (Pseudomonas aeruginosa (strain PA7)).